Consider the following 306-residue polypeptide: tRNA N6-adenosine threonylcarbamoyltransferase (306 aa).

Fe cation is bound by residues His-110 and His-114. Residues 132–136, Asp-165, Gly-178, Asp-182, and Asn-268 each bind substrate; that span reads IASGK. Asp-292 contacts Fe cation.

The protein belongs to the KAE1 / TsaD family. Requires Fe(2+) as cofactor.

Its subcellular location is the cytoplasm. It catalyses the reaction L-threonylcarbamoyladenylate + adenosine(37) in tRNA = N(6)-L-threonylcarbamoyladenosine(37) in tRNA + AMP + H(+). In terms of biological role, required for the formation of a threonylcarbamoyl group on adenosine at position 37 (t(6)A37) in tRNAs that read codons beginning with adenine. Is involved in the transfer of the threonylcarbamoyl moiety of threonylcarbamoyl-AMP (TC-AMP) to the N6 group of A37, together with TsaE and TsaB. TsaD likely plays a direct catalytic role in this reaction. This chain is tRNA N6-adenosine threonylcarbamoyltransferase, found in Malacoplasma penetrans (strain HF-2) (Mycoplasma penetrans).